We begin with the raw amino-acid sequence, 235 residues long: 5'-methylthioadenosine/S-adenosylhomocysteine nucleosidase (235 aa).

The active-site Proton acceptor is the glutamate 12. Substrate contacts are provided by residues glycine 78, methionine 153, and 174–175 (ME). Aspartate 198 functions as the Proton donor in the catalytic mechanism.

The protein belongs to the PNP/UDP phosphorylase family. MtnN subfamily.

It carries out the reaction S-adenosyl-L-homocysteine + H2O = S-(5-deoxy-D-ribos-5-yl)-L-homocysteine + adenine. The catalysed reaction is S-methyl-5'-thioadenosine + H2O = 5-(methylsulfanyl)-D-ribose + adenine. The enzyme catalyses 5'-deoxyadenosine + H2O = 5-deoxy-D-ribose + adenine. It functions in the pathway amino-acid biosynthesis; L-methionine biosynthesis via salvage pathway; S-methyl-5-thio-alpha-D-ribose 1-phosphate from S-methyl-5'-thioadenosine (hydrolase route): step 1/2. Its function is as follows. Catalyzes the irreversible cleavage of the glycosidic bond in both 5'-methylthioadenosine (MTA) and S-adenosylhomocysteine (SAH/AdoHcy) to adenine and the corresponding thioribose, 5'-methylthioribose and S-ribosylhomocysteine, respectively. Also cleaves 5'-deoxyadenosine, a toxic by-product of radical S-adenosylmethionine (SAM) enzymes, into 5-deoxyribose and adenine. The sequence is that of 5'-methylthioadenosine/S-adenosylhomocysteine nucleosidase from Geobacillus kaustophilus (strain HTA426).